Here is a 385-residue protein sequence, read N- to C-terminus: Queuine tRNA-ribosyltransferase (385 aa).

The Proton acceptor role is filled by Asp-92. Residues 92–96, Asp-146, Gln-188, and Gly-215 contribute to the substrate site; that span reads DSGGF. The tract at residues 246 to 252 is RNA binding; the sequence is GVGHPED. Asp-265 acts as the Nucleophile in catalysis. The segment at 270-274 is RNA binding; important for wobble base 34 recognition; sequence TRTGR. The Zn(2+) site is built by Cys-303, Cys-305, Cys-308, and His-334.

The protein belongs to the queuine tRNA-ribosyltransferase family. Homodimer. Within each dimer, one monomer is responsible for RNA recognition and catalysis, while the other monomer binds to the replacement base PreQ1. Requires Zn(2+) as cofactor.

It carries out the reaction 7-aminomethyl-7-carbaguanine + guanosine(34) in tRNA = 7-aminomethyl-7-carbaguanosine(34) in tRNA + guanine. Its pathway is tRNA modification; tRNA-queuosine biosynthesis. Its function is as follows. Catalyzes the base-exchange of a guanine (G) residue with the queuine precursor 7-aminomethyl-7-deazaguanine (PreQ1) at position 34 (anticodon wobble position) in tRNAs with GU(N) anticodons (tRNA-Asp, -Asn, -His and -Tyr). Catalysis occurs through a double-displacement mechanism. The nucleophile active site attacks the C1' of nucleotide 34 to detach the guanine base from the RNA, forming a covalent enzyme-RNA intermediate. The proton acceptor active site deprotonates the incoming PreQ1, allowing a nucleophilic attack on the C1' of the ribose to form the product. After dissociation, two additional enzymatic reactions on the tRNA convert PreQ1 to queuine (Q), resulting in the hypermodified nucleoside queuosine (7-(((4,5-cis-dihydroxy-2-cyclopenten-1-yl)amino)methyl)-7-deazaguanosine). The protein is Queuine tRNA-ribosyltransferase of Thermus thermophilus (strain ATCC BAA-163 / DSM 7039 / HB27).